The following is a 507-amino-acid chain: ATP synthase subunit alpha, chloroplastic (507 aa).

170–177 (GDRQTGKT) lines the ATP pocket.

Belongs to the ATPase alpha/beta chains family. F-type ATPases have 2 components, CF(1) - the catalytic core - and CF(0) - the membrane proton channel. CF(1) has five subunits: alpha(3), beta(3), gamma(1), delta(1), epsilon(1). CF(0) has four main subunits: a, b, b' and c.

It is found in the plastid. It localises to the chloroplast thylakoid membrane. It catalyses the reaction ATP + H2O + 4 H(+)(in) = ADP + phosphate + 5 H(+)(out). In terms of biological role, produces ATP from ADP in the presence of a proton gradient across the membrane. The alpha chain is a regulatory subunit. The protein is ATP synthase subunit alpha, chloroplastic of Amborella trichopoda.